The sequence spans 422 residues: UPF0761 membrane protein XAC0937 (422 aa).

6 consecutive transmembrane segments (helical) span residues 45-65 (VFAL…FPAF), 102-122 (FTVA…HSIE), 151-171 (GTML…LPLF), 179-199 (LAEF…IVLI), 213-233 (ALPG…GFGF), and 247-267 (ALSA…SVLL).

This sequence belongs to the UPF0761 family.

The protein localises to the cell inner membrane. This is UPF0761 membrane protein XAC0937 from Xanthomonas axonopodis pv. citri (strain 306).